The chain runs to 166 residues: Regulatory protein RecX (166 aa).

The protein belongs to the RecX family.

It is found in the cytoplasm. Modulates RecA activity. In Escherichia coli (strain SE11), this protein is Regulatory protein RecX.